The primary structure comprises 364 residues: Ferrochelatase (364 aa).

Positions 210 and 291 each coordinate Fe cation.

It belongs to the ferrochelatase family.

Its subcellular location is the cytoplasm. It catalyses the reaction heme b + 2 H(+) = protoporphyrin IX + Fe(2+). Its pathway is porphyrin-containing compound metabolism; protoheme biosynthesis; protoheme from protoporphyrin-IX: step 1/1. Functionally, catalyzes the ferrous insertion into protoporphyrin IX. In Idiomarina loihiensis (strain ATCC BAA-735 / DSM 15497 / L2-TR), this protein is Ferrochelatase.